Consider the following 199-residue polypeptide: Phosphoserine phosphatase RsbX (199 aa).

One can recognise a PPM-type phosphatase domain in the interval 11 to 198 (QTLVYQLNKE…DDLTYILGQL (188 aa)).

The enzyme catalyses O-phospho-L-serine + H2O = L-serine + phosphate. It catalyses the reaction O-phospho-D-serine + H2O = D-serine + phosphate. Its function is as follows. Negative regulator of sigma-B activity. Dephosphorylates RsbS. Plays a role both in maintaining low sigma-B activity during growth and in reestablishing prestress sigma-B activity after induction. Could have a negative feedback role by indirectly communicating sigma-B protein levels. This Bacillus subtilis (strain 168) protein is Phosphoserine phosphatase RsbX (rsbX).